The following is a 762-amino-acid chain: 5-methyltetrahydropteroyltriglutamate--homocysteine methyltransferase (762 aa).

Residues 16-19 (RELK) and Lys118 contribute to the 5-methyltetrahydropteroyltri-L-glutamate site. Residues 439-441 (IGS) and Glu492 each bind L-homocysteine. L-methionine-binding positions include 439–441 (IGS) and Glu492. 5-methyltetrahydropteroyltri-L-glutamate contacts are provided by residues 523–524 (RC) and Trp569. Asp607 lines the L-homocysteine pocket. Asp607 contributes to the L-methionine binding site. Glu613 provides a ligand contact to 5-methyltetrahydropteroyltri-L-glutamate. Positions 649, 651, and 673 each coordinate Zn(2+). His702 functions as the Proton donor in the catalytic mechanism. Cys734 is a binding site for Zn(2+).

It belongs to the vitamin-B12 independent methionine synthase family. Requires Zn(2+) as cofactor.

It carries out the reaction 5-methyltetrahydropteroyltri-L-glutamate + L-homocysteine = tetrahydropteroyltri-L-glutamate + L-methionine. It participates in amino-acid biosynthesis; L-methionine biosynthesis via de novo pathway; L-methionine from L-homocysteine (MetE route): step 1/1. In terms of biological role, catalyzes the transfer of a methyl group from 5-methyltetrahydrofolate to homocysteine resulting in methionine formation. This is 5-methyltetrahydropteroyltriglutamate--homocysteine methyltransferase from Pseudomonas entomophila (strain L48).